Consider the following 342-residue polypeptide: Isopentenyl-diphosphate delta-isomerase (342 aa).

12-13 (RK) provides a ligand contact to substrate. FMN-binding positions include 71–73 (AMT), Ser-101, and Asn-129. 101 to 103 (SQR) lines the substrate pocket. Gln-163 serves as a coordination point for substrate. Glu-164 provides a ligand contact to Mg(2+). FMN-binding positions include Lys-195, Thr-225, 272–274 (GIR), and 293–294 (AR).

Belongs to the IPP isomerase type 2 family. As to quaternary structure, homooctamer. Dimer of tetramers. Requires FMN as cofactor. The cofactor is NADPH. It depends on Mg(2+) as a cofactor.

The protein resides in the cytoplasm. The catalysed reaction is isopentenyl diphosphate = dimethylallyl diphosphate. Involved in the biosynthesis of isoprenoids. Catalyzes the 1,3-allylic rearrangement of the homoallylic substrate isopentenyl (IPP) to its allylic isomer, dimethylallyl diphosphate (DMAPP). In Mycolicibacterium vanbaalenii (strain DSM 7251 / JCM 13017 / BCRC 16820 / KCTC 9966 / NRRL B-24157 / PYR-1) (Mycobacterium vanbaalenii), this protein is Isopentenyl-diphosphate delta-isomerase.